Reading from the N-terminus, the 275-residue chain is MSAEVKVTGQNQEQFLLLAKSAKGAALATLIHQVLEAPGVYVFGELLDMPNVRELAESDFASTFRLLTVFAYGTYADYLAEARNLPPLTDAQKNKLRHLSVVTLAAKVKCIPYAVLLEALALRNVRQLEDLVIEAVYADVLRGSLDQRNQRLEVDYSIGRDIQRQDLSAIAQTLQEWCVGCEVVLSGIEEQVSRANQHKEQQLGLKQQIESEVANLKKTIKVTTAAAAAATSQDPEQHLTELREPASGTNQRQPSKKASKGKGLRGSAKIWSKSN.

Residue Ser-2 is modified to N-acetylserine. Residues 2–159 (SAEVKVTGQN…QRLEVDYSIG (158 aa)) enclose the PCI domain. Residues 185–233 (LSGIEEQVSRANQHKEQQLGLKQQIESEVANLKKTIKVTTAAAAAATSQ) are a coiled coil. Residues 228–275 (AAATSQDPEQHLTELREPASGTNQRQPSKKASKGKGLRGSAKIWSKSN) are disordered. Over residues 235 to 244 (PEQHLTELRE) the composition is skewed to basic and acidic residues. The span at 254–263 (PSKKASKGKG) shows a compositional bias: basic residues.

The protein belongs to the CSN7/EIF3M family. CSN7 subfamily. In terms of assembly, component of the CSN complex, composed of COPS1/GPS1, COPS2, COPS3, COPS4, COPS5, COPS6, COPS7 (COPS7A or COPS7B), COPS8 and COPS9. In the complex, it probably interacts directly with COPS1, COPS2, COPS4, COPS5, COPS6 and COPS8. Interacts with PMF1. Interacts with the translation initiation factor EIF3S6. Interacts with CK2 and PKD. Interacts directly with ID3. Post-translationally, phosphorylated by CK2 and PKD kinases.

The protein localises to the cytoplasm. It localises to the nucleus. Functionally, component of the COP9 signalosome complex (CSN), a complex involved in various cellular and developmental processes. The CSN complex is an essential regulator of the ubiquitin (Ubl) conjugation pathway by mediating the deneddylation of the cullin subunits of SCF-type E3 ligase complexes, leading to decrease the Ubl ligase activity of SCF-type complexes such as SCF, CSA or DDB2. The complex is also involved in phosphorylation of p53/TP53, JUN, I-kappa-B-alpha/NFKBIA, ITPK1 and IRF8/ICSBP, possibly via its association with CK2 and PKD kinases. CSN-dependent phosphorylation of TP53 and JUN promotes and protects degradation by the Ubl system, respectively. This is COP9 signalosome complex subunit 7a (Cops7a) from Mus musculus (Mouse).